A 757-amino-acid polypeptide reads, in one-letter code: Protein aardvark (757 aa).

3 disordered regions span residues 39–63, 122–166, and 256–285; these read SSIN…DSNN, LEEN…SSIL, and SSNG…IESS. Positions 121–205 form a coiled coil; the sequence is ILEENNNNNN…FNQFNFLEGI (85 aa). Low complexity-rich tracts occupy residues 125–164 and 256–270; these read NNNN…SSSS and SSNG…NNNN. One can recognise an F-box domain in the interval 310-356; sequence QFDIFLIPTEMLVHLLSFLSANDLWRISLTCKRIWYIVDVFKFWELL. ARM repeat units lie at residues 454 to 498, 506 to 548, 549 to 591, 592 to 634, 635 to 678, and 679 to 723; these read GGIS…SNDN, GGIQ…VAIE, GGIQ…SAKE, GGIG…ISRQ, NGIQ…IARE, and GGIN…RSGG.

The protein belongs to the beta-catenin family.

It is found in the cytoplasm. Its subcellular location is the cell junction. In terms of biological role, required to regulate pattern formation during multi-cellular stages of development and for the formation of adherens junctions. Plays a structural role during the regulation of stalk formation. Involved in cell signaling. Required for spore-cell differentiation. Overexpression increases number and size of cell junctions and reduces spore-cell formation. This is Protein aardvark (aarA) from Dictyostelium discoideum (Social amoeba).